A 264-amino-acid polypeptide reads, in one-letter code: NADH dehydrogenase [ubiquinone] iron-sulfur protein 3, mitochondrial (264 aa).

Residues 1 to 36 (MAAAAVARLWWRGILGASALTRGTGRPSVLLLPVRR) constitute a mitochondrion transit peptide.

It belongs to the complex I 30 kDa subunit family. As to quaternary structure, core subunit of respiratory chain NADH dehydrogenase (Complex I) which is composed of 45 different subunits. Interacts with NDUFAF3. Interacts with RAB5IF. Found in subcomplexes containing subunits NDUFS2, MT-ND1 and NDUFA13.

It localises to the mitochondrion inner membrane. It carries out the reaction a ubiquinone + NADH + 5 H(+)(in) = a ubiquinol + NAD(+) + 4 H(+)(out). Its function is as follows. Core subunit of the mitochondrial membrane respiratory chain NADH dehydrogenase (Complex I) which catalyzes electron transfer from NADH through the respiratory chain, using ubiquinone as an electron acceptor. Essential for the catalytic activity and assembly of complex I. The sequence is that of NADH dehydrogenase [ubiquinone] iron-sulfur protein 3, mitochondrial (NDUFS3) from Homo sapiens (Human).